The chain runs to 594 residues: RING finger protein 207 (594 aa).

The RING-type zinc-finger motif lies at 25-64 (CPLCHAQYERPCLLDCFHDFCAGCLRGRTADGRVACPLCQ). The segment at 93–145 (VEAVHCANCDLDCSKQDAETACFCNTCGQPLCARCRDETHRARMFARHDIVAL) adopts a B box-type; atypical zinc-finger fold. Zn(2+) is bound by residues cysteine 98, cysteine 101, cysteine 127, and histidine 132. A disordered region spans residues 369–400 (NTLAGGSGPKVLMGPSCPSPVRKVSRSPVQKP). A coiled-coil region spans residues 424 to 458 (CRHYEDSYRGLQAEVQNLKDQVQELHRDLTKHHSL). Positions 552-594 (FQASADDESENPQTAYDASRNGETPASLLLPGSVASAEPPFVN) are disordered. Residues 562 to 575 (NPQTAYDASRNGET) are compositionally biased toward polar residues.

As to quaternary structure, interacts with the core-glycosylated, but not the fully glycosylated form of KCNH2/HERG. Interacts with DNAJA1 and HSPA8. Interacts (via the C-terminus) with HSPA1A; this interaction additively increases KCNH2 expression.

Its subcellular location is the cytoplasm. Plays a role in cardiac repolarization possibly by stabilizing membrane expression of the potassium channel KCNH2/HERG, or by assisting its synthesis, folding or export from the endoplasmic reticulum, in a heat shock protein-dependent manner. The polypeptide is RING finger protein 207 (RNF207) (Oryctolagus cuniculus (Rabbit)).